Reading from the N-terminus, the 419-residue chain is Serine--tRNA ligase (419 aa).

An L-serine-binding site is contributed by 226–228; it reads TSE. Residues 257-259 and V273 each bind ATP; that span reads RRE. E280 lines the L-serine pocket. 344–347 lines the ATP pocket; it reads ELTS. T379 is a binding site for L-serine.

The protein belongs to the class-II aminoacyl-tRNA synthetase family. Type-1 seryl-tRNA synthetase subfamily. Homodimer. The tRNA molecule binds across the dimer.

The protein resides in the cytoplasm. The catalysed reaction is tRNA(Ser) + L-serine + ATP = L-seryl-tRNA(Ser) + AMP + diphosphate + H(+). It carries out the reaction tRNA(Sec) + L-serine + ATP = L-seryl-tRNA(Sec) + AMP + diphosphate + H(+). Its pathway is aminoacyl-tRNA biosynthesis; selenocysteinyl-tRNA(Sec) biosynthesis; L-seryl-tRNA(Sec) from L-serine and tRNA(Sec): step 1/1. In terms of biological role, catalyzes the attachment of serine to tRNA(Ser). Is also able to aminoacylate tRNA(Sec) with serine, to form the misacylated tRNA L-seryl-tRNA(Sec), which will be further converted into selenocysteinyl-tRNA(Sec). The sequence is that of Serine--tRNA ligase from Mycobacterium tuberculosis (strain CDC 1551 / Oshkosh).